The chain runs to 237 residues: LexA repressor (237 aa).

Positions 1-12 (MPVKDSSSNKKN) are enriched in polar residues. The disordered stretch occupies residues 1–20 (MPVKDSSSNKKNQIGKLSER). A DNA-binding region (H-T-H motif) is located at residues 41–61 (IREIGDAAGLQSTSSVAYQLK). The segment covering 67–80 (GYLRRDPNKPRAVD) has biased composition (basic and acidic residues). Residues 67-112 (GYLRRDPNKPRAVDVRALPDPIPSKPGRKPGPKKSSVAISPDPAET) form a disordered region. Catalysis depends on for autocatalytic cleavage activity residues serine 161 and lysine 198.

This sequence belongs to the peptidase S24 family. In terms of assembly, homodimer.

It carries out the reaction Hydrolysis of Ala-|-Gly bond in repressor LexA.. Its function is as follows. Represses a number of genes involved in the response to DNA damage (SOS response), including recA and lexA. In the presence of single-stranded DNA, RecA interacts with LexA causing an autocatalytic cleavage which disrupts the DNA-binding part of LexA, leading to derepression of the SOS regulon and eventually DNA repair. The chain is LexA repressor from Corynebacterium diphtheriae (strain ATCC 700971 / NCTC 13129 / Biotype gravis).